Consider the following 73-residue polypeptide: UPF0154 protein LJ_1506 (73 aa).

A helical membrane pass occupies residues 3-23 (LGLAIFLIIIALLIGLVGGFY).

It belongs to the UPF0154 family.

Its subcellular location is the cell membrane. The sequence is that of UPF0154 protein LJ_1506 from Lactobacillus johnsonii (strain CNCM I-12250 / La1 / NCC 533).